Reading from the N-terminus, the 198-residue chain is Large ribosomal subunit protein bL12m (198 aa).

The transit peptide at 1-36 directs the protein to the mitochondrion; the sequence is MLPSATSLLRGPCLGLRAAALRLVRQQVPHVCAVRL. The segment covering 106–115 has biased composition (low complexity); it reads GAAPAPTAPE. A disordered region spans residues 106 to 126; the sequence is GAAPAPTAPEAAEEDVPKQKE. K125, K138, K142, and K144 each carry N6-acetyllysine. K150 carries the N6-acetyllysine; alternate modification. K150 is modified (N6-succinyllysine; alternate). A Glycyl lysine isopeptide (Lys-Gly) (interchain with G-Cter in ubiquitin) cross-link involves residue K150. K162 carries the N6-succinyllysine modification. An N6-acetyllysine mark is found at K163 and K173. K178 carries the N6-acetyllysine; alternate modification. The residue at position 178 (K178) is an N6-succinyllysine; alternate. K185 is modified (N6-acetyllysine).

The protein belongs to the bacterial ribosomal protein bL12 family. Component of the mitochondrial ribosome large subunit (39S) which comprises a 16S rRNA and about 50 distinct proteins. Interacts with NOA1. Two mature forms are produced by differential two-step proteolytic cleavage. Cleaved by the mitochondrial processing protease to produce the long mature form and subsequently by the mitochondrial intermediate protease to produce the short mature form. Post-translationally, in the presence of CUL3, undergoes 'Lys-63'-linked ubiquitination at Lys-150 which results in proteasomal degradation.

Its subcellular location is the mitochondrion matrix. Functionally, as a component of the mitochondrial large ribosomal subunit, plays a role in mitochondrial translation. When present in mitochondria as a free protein not associated with the ribosome, associates with mitochondrial RNA polymerase POLRMT to activate transcription. Required for POLRMT stability. This Bos taurus (Bovine) protein is Large ribosomal subunit protein bL12m (MRPL12).